Here is a 192-residue protein sequence, read N- to C-terminus: Xanthine phosphoribosyltransferase (192 aa).

Leucine 20 and asparagine 27 together coordinate xanthine. 5-phospho-alpha-D-ribose 1-diphosphate is bound at residue 128–132; it reads AHGEA. Lysine 156 is a xanthine binding site.

The protein belongs to the purine/pyrimidine phosphoribosyltransferase family. Xpt subfamily. In terms of assembly, homodimer.

The protein localises to the cytoplasm. The enzyme catalyses XMP + diphosphate = xanthine + 5-phospho-alpha-D-ribose 1-diphosphate. Its pathway is purine metabolism; XMP biosynthesis via salvage pathway; XMP from xanthine: step 1/1. Functionally, converts the preformed base xanthine, a product of nucleic acid breakdown, to xanthosine 5'-monophosphate (XMP), so it can be reused for RNA or DNA synthesis. The chain is Xanthine phosphoribosyltransferase from Lactobacillus johnsonii (strain CNCM I-12250 / La1 / NCC 533).